Reading from the N-terminus, the 149-residue chain is Envelope glycoprotein UL4 (149 aa).

Residues 1-18 form the signal peptide; that stretch reads MMLRTWISLPMVLLDAYC. Residues Asn-46, Asn-51, Asn-59, Asn-67, Asn-105, Asn-109, Asn-119, Asn-136, and Asn-145 are each glycosylated (N-linked (GlcNAc...) asparagine; by host).

The protein belongs to the RL11 family. Post-translationally, N-glycosylated and possibly O-glycosylated.

Its subcellular location is the virion membrane. This chain is Envelope glycoprotein UL4 (UL4), found in Human cytomegalovirus (strain Merlin) (HHV-5).